The sequence spans 579 residues: UPF0324 membrane protein DVU_0943 (579 aa).

10 consecutive transmembrane segments (helical) span residues 26-45, 193-215, 225-243, 250-272, 305-327, 369-391, 430-452, 473-495, 515-533, and 546-568; these read YWAI…LFLA, AFNI…AIGM, FLVG…QMMG, YWGI…TVGT, IGIP…TFIF, LTLS…PAFI, AATI…AVYW, FPKF…GSLG, LRGW…ATNF, and LILY…YIMF.

This sequence belongs to the UPF0324 family.

The protein localises to the cell membrane. The protein is UPF0324 membrane protein DVU_0943 of Nitratidesulfovibrio vulgaris (strain ATCC 29579 / DSM 644 / CCUG 34227 / NCIMB 8303 / VKM B-1760 / Hildenborough) (Desulfovibrio vulgaris).